Here is a 136-residue protein sequence, read N- to C-terminus: NADH-ubiquinone oxidoreductase chain 3 (136 aa).

3 helical membrane-spanning segments follow: residues 5–25 (TFFL…NLIF), 55–75 (ISFF…LLVY), and 85–105 (GIYG…GFAF).

It belongs to the complex I subunit 3 family.

It is found in the mitochondrion membrane. It catalyses the reaction a ubiquinone + NADH + 5 H(+)(in) = a ubiquinol + NAD(+) + 4 H(+)(out). Functionally, core subunit of the mitochondrial membrane respiratory chain NADH dehydrogenase (Complex I) that is believed to belong to the minimal assembly required for catalysis. Complex I functions in the transfer of electrons from NADH to the respiratory chain. The immediate electron acceptor for the enzyme is believed to be ubiquinone. The chain is NADH-ubiquinone oxidoreductase chain 3 (nd3) from Emericella nidulans (Aspergillus nidulans).